The following is a 393-amino-acid chain: 26S proteasome regulatory subunit 10B (393 aa).

178–185 (GPPGTGKT) lines the ATP pocket.

Belongs to the AAA ATPase family.

The protein localises to the cytoplasm. It is found in the nucleus. Functionally, the 26S proteasome is involved in the ATP-dependent degradation of ubiquitinated proteins. The regulatory (or ATPase) complex confers ATP dependency and substrate specificity to the 26S complex. This chain is 26S proteasome regulatory subunit 10B (psmC6), found in Dictyostelium discoideum (Social amoeba).